The following is a 251-amino-acid chain: Triosephosphate isomerase (251 aa).

Residue 9-11 (NWK) coordinates substrate. The active-site Electrophile is the H95. Residue E167 is the Proton acceptor of the active site. Residues G173, S212, and 233–234 (GG) contribute to the substrate site.

It belongs to the triosephosphate isomerase family. As to quaternary structure, homodimer.

Its subcellular location is the cytoplasm. It catalyses the reaction D-glyceraldehyde 3-phosphate = dihydroxyacetone phosphate. The protein operates within carbohydrate biosynthesis; gluconeogenesis. Its pathway is carbohydrate degradation; glycolysis; D-glyceraldehyde 3-phosphate from glycerone phosphate: step 1/1. In terms of biological role, involved in the gluconeogenesis. Catalyzes stereospecifically the conversion of dihydroxyacetone phosphate (DHAP) to D-glyceraldehyde-3-phosphate (G3P). In Pseudomonas putida (strain GB-1), this protein is Triosephosphate isomerase.